Consider the following 528-residue polypeptide: ATP synthase subunit beta 2 (528 aa).

Residues 1-10 (MADPQATNGT) are compositionally biased toward polar residues. A disordered region spans residues 1 to 27 (MADPQATNGTGAACAERDASDVGDARD). Basic and acidic residues predominate over residues 15-27 (AERDASDVGDARD). 179 to 186 (GGAGVGKT) contacts ATP. The segment covering 488–499 (AAAREADARREA) has biased composition (basic and acidic residues). The disordered stretch occupies residues 488–528 (AAAREADARREAAAAASGAGPGTTSDPASGSAEPQGARHGR).

It belongs to the ATPase alpha/beta chains family. In terms of assembly, F-type ATPases have 2 components, CF(1) - the catalytic core - and CF(0) - the membrane proton channel. CF(1) has five subunits: alpha(3), beta(3), gamma(1), delta(1), epsilon(1). CF(0) has three main subunits: a(1), b(2) and c(9-12). The alpha and beta chains form an alternating ring which encloses part of the gamma chain. CF(1) is attached to CF(0) by a central stalk formed by the gamma and epsilon chains, while a peripheral stalk is formed by the delta and b chains.

The protein resides in the cell inner membrane. The catalysed reaction is ATP + H2O + 4 H(+)(in) = ADP + phosphate + 5 H(+)(out). In terms of biological role, produces ATP from ADP in the presence of a proton gradient across the membrane. The catalytic sites are hosted primarily by the beta subunits. The protein is ATP synthase subunit beta 2 of Burkholderia pseudomallei (strain 1106a).